Reading from the N-terminus, the 189-residue chain is Probable nicotinate-nucleotide adenylyltransferase (189 aa).

This sequence belongs to the NadD family.

It catalyses the reaction nicotinate beta-D-ribonucleotide + ATP + H(+) = deamido-NAD(+) + diphosphate. The protein operates within cofactor biosynthesis; NAD(+) biosynthesis; deamido-NAD(+) from nicotinate D-ribonucleotide: step 1/1. Catalyzes the reversible adenylation of nicotinate mononucleotide (NaMN) to nicotinic acid adenine dinucleotide (NaAD). The protein is Probable nicotinate-nucleotide adenylyltransferase of Cereibacter sphaeroides (strain ATCC 17023 / DSM 158 / JCM 6121 / CCUG 31486 / LMG 2827 / NBRC 12203 / NCIMB 8253 / ATH 2.4.1.) (Rhodobacter sphaeroides).